The chain runs to 344 residues: Heat-inducible transcription repressor HrcA (344 aa).

It belongs to the HrcA family.

Its function is as follows. Negative regulator of class I heat shock genes (grpE-dnaK-dnaJ and groELS operons). Prevents heat-shock induction of these operons. This chain is Heat-inducible transcription repressor HrcA, found in Streptococcus equi subsp. zooepidemicus (strain MGCS10565).